A 740-amino-acid chain; its full sequence is D-ornithine 4,5-aminomutase subunit beta (740 aa).

Residues Glu-81, Tyr-160, His-182, and 294–296 each bind substrate; that span reads RAQ. The B12-binding domain occupies 602-739; the sequence is PLKIVAATVG…VKKRREMREG (138 aa). Adenosylcob(III)alamin is bound by residues 614 to 616 and His-615; that span reads EHS. Lys-626 carries the N6-(pyridoxal phosphate)lysine modification. Adenosylcob(III)alamin contacts are provided by residues 664 to 669, Thr-700, and Ser-720; that span reads STIISH.

As to quaternary structure, heterotetramer of 2 alpha (OraS) and 2 beta (OraE) subunits. Adenosylcob(III)alamin serves as cofactor. Pyridoxal 5'-phosphate is required as a cofactor.

It carries out the reaction D-ornithine = (2R,4S)-2,4-diaminopentanoate. With respect to regulation, increased activity in the presence of dithiothreitol (DTT) in vitro. Inhibited by 1 mM potassium phosphate and potassium chloride. Inhibited by L-alpha-ornithine, D,L-alpha-lysine, L-beta-lysine (50%-60%), L-alpha-lysine (26%) and by delta-amino-n-valeric acid to a lesser extent. Significant decrease in activity is observed in the presence of 0.2 mM p-chloromercuribenzoate, N-ethylmaleimide and also by 2 mM iodoacetate to a lesser extent but not inhibited by arsenite. In terms of biological role, component of a complex that catalyzes the reversible migration of the omega amino group of D-ornithine to C-4 to form (2R,4S)-2,4-diaminopentanoic acid. OraE may be the catalytic subunit. Active only on D-ornithine and 2,4-diaminopentanoic acid but not active on L-ornithine, L-beta-lysine, L-alpha-lysine or D-alpha-lysine. This chain is D-ornithine 4,5-aminomutase subunit beta (oraE), found in Acetoanaerobium sticklandii (strain ATCC 12662 / DSM 519 / JCM 1433 / CCUG 9281 / NCIMB 10654 / HF) (Clostridium sticklandii).